The chain runs to 275 residues: Putative rhamnulose-1-phosphate aldolase (275 aa).

Residue Glu-117 is part of the active site. His-141, His-143, and His-212 together coordinate Zn(2+).

This sequence belongs to the aldolase class II family. RhaD subfamily. In terms of assembly, homotetramer. The cofactor is Zn(2+).

It localises to the cytoplasm. It catalyses the reaction L-rhamnulose 1-phosphate = (S)-lactaldehyde + dihydroxyacetone phosphate. The protein operates within carbohydrate degradation; L-rhamnose degradation; glycerone phosphate from L-rhamnose: step 3/3. Catalyzes the reversible cleavage of L-rhamnulose-1-phosphate to dihydroxyacetone phosphate (DHAP) and L-lactaldehyde. In Salmonella typhi, this protein is Putative rhamnulose-1-phosphate aldolase.